The following is a 188-amino-acid chain: Elongation factor P (188 aa).

Lys34 is modified (N6-(3,6-diaminohexanoyl)-5-hydroxylysine).

Belongs to the elongation factor P family. May be beta-lysylated on the epsilon-amino group of Lys-34 by the combined action of EpmA and EpmB, and then hydroxylated on the C5 position of the same residue by EpmC (if this protein is present). Lysylation is critical for the stimulatory effect of EF-P on peptide-bond formation. The lysylation moiety may extend toward the peptidyltransferase center and stabilize the terminal 3-CCA end of the tRNA. Hydroxylation of the C5 position on Lys-34 may allow additional potential stabilizing hydrogen-bond interactions with the P-tRNA.

It localises to the cytoplasm. It functions in the pathway protein biosynthesis; polypeptide chain elongation. Functionally, involved in peptide bond synthesis. Alleviates ribosome stalling that occurs when 3 or more consecutive Pro residues or the sequence PPG is present in a protein, possibly by augmenting the peptidyl transferase activity of the ribosome. Modification of Lys-34 is required for alleviation. The sequence is that of Elongation factor P from Aliivibrio fischeri (strain ATCC 700601 / ES114) (Vibrio fischeri).